We begin with the raw amino-acid sequence, 166 residues long: Large ribosomal subunit protein uL10 (166 aa).

It belongs to the universal ribosomal protein uL10 family. In terms of assembly, part of the ribosomal stalk of the 50S ribosomal subunit. The N-terminus interacts with L11 and the large rRNA to form the base of the stalk. The C-terminus forms an elongated spine to which L12 dimers bind in a sequential fashion forming a multimeric L10(L12)X complex.

In terms of biological role, forms part of the ribosomal stalk, playing a central role in the interaction of the ribosome with GTP-bound translation factors. The sequence is that of Large ribosomal subunit protein uL10 from Aeromonas hydrophila subsp. hydrophila (strain ATCC 7966 / DSM 30187 / BCRC 13018 / CCUG 14551 / JCM 1027 / KCTC 2358 / NCIMB 9240 / NCTC 8049).